The chain runs to 508 residues: 6-phosphogluconate dehydrogenase, decarboxylating 2, chloroplastic (508 aa).

The N-terminal 12 residues, M1–S12, are a transit peptide targeting the chloroplast. Residues G28–G33, N51–T53, V95–A97, and N123 contribute to the NADP(+) site. Residues N123 and S149 to G151 contribute to the substrate site. The Proton acceptor role is filled by K203. Substrate is bound at residue H206–N207. The active-site Proton donor is the E210. 5 residues coordinate substrate: Y211, K284, R311, R475, and H481.

This sequence belongs to the 6-phosphogluconate dehydrogenase family. Homodimer.

The protein localises to the plastid. Its subcellular location is the chloroplast. It catalyses the reaction 6-phospho-D-gluconate + NADP(+) = D-ribulose 5-phosphate + CO2 + NADPH. It participates in carbohydrate degradation; pentose phosphate pathway; D-ribulose 5-phosphate from D-glucose 6-phosphate (oxidative stage): step 3/3. Catalyzes the oxidative decarboxylation of 6-phosphogluconate to ribulose 5-phosphate and CO(2), with concomitant reduction of NADP to NADPH. This chain is 6-phosphogluconate dehydrogenase, decarboxylating 2, chloroplastic (G6PGH2), found in Oryza sativa subsp. japonica (Rice).